The chain runs to 714 residues: Polyribonucleotide nucleotidyltransferase (714 aa).

Residues D489 and D495 each coordinate Mg(2+). A KH domain is found at P556 to I615. One can recognise an S1 motif domain in the interval G625–K693. A disordered region spans residues S691 to D714. The segment covering P700 to D714 has biased composition (basic and acidic residues).

This sequence belongs to the polyribonucleotide nucleotidyltransferase family. It depends on Mg(2+) as a cofactor.

It is found in the cytoplasm. It catalyses the reaction RNA(n+1) + phosphate = RNA(n) + a ribonucleoside 5'-diphosphate. Involved in mRNA degradation. Catalyzes the phosphorolysis of single-stranded polyribonucleotides processively in the 3'- to 5'-direction. In Streptococcus equi subsp. equi (strain 4047), this protein is Polyribonucleotide nucleotidyltransferase.